Reading from the N-terminus, the 880-residue chain is Leucine-rich repeat-containing protein 66 (880 aa).

A helical membrane pass occupies residues 4-24; sequence LYFRVITIVIGLYFTGIMTNA. N-linked (GlcNAc...) asparagine glycosylation is present at asparagine 45. LRR repeat units lie at residues 86–107, 110–130, 149–171, 172–193, 196–217, and 220–241; these read KIKHLDLSNNLISKITLSPFAY, ALEVLNLSNNAIHSLSLDLLS, LLKVLILQRNKLSDTPKGLWKLK, SLQSLDLSFNGILQIGWSDFHN, QLENLCLKSNKIFKIPPQAFKD, and KLQVIDLSNNALITILPMMIIA. Asparagine 115 carries N-linked (GlcNAc...) asparagine glycosylation. Positions 319 to 368 are disordered; sequence SKAERPQGGRHTGISTLGKKAKAGSGLRKKQRRLPRSVRSTRDVQAAGKK. A compositionally biased stretch (basic residues) spans 337 to 354; sequence KKAKAGSGLRKKQRRLPR. A helical membrane pass occupies residues 376 to 396; it reads ALAVCLSVFITFLVAFSLGAF. Disordered stretches follow at residues 463–504 and 679–746; these read PHPH…NDGA and VTPA…SKDN. The segment covering 483–493 has biased composition (polar residues); the sequence is GSSQSPGQCGD. The span at 697-707 shows a compositional bias: acidic residues; it reads CELESDCDSDE. Over residues 709 to 720 the composition is skewed to low complexity; sequence SLFTLSSISSES. Serine 723 is modified (phosphoserine). Residues 737–746 are compositionally biased toward polar residues; the sequence is DESSGASKDN. Asparagine 746 carries N-linked (GlcNAc...) asparagine glycosylation. A Phosphoserine modification is found at serine 752. A glycan (N-linked (GlcNAc...) asparagine) is linked at asparagine 756. Disordered regions lie at residues 764–816 and 855–880; these read GKCK…PLGD and TPPCSAEVPSDPDKAAFHERDSDILK. Basic and acidic residues-rich tracts occupy residues 788–800 and 865–880; these read THLENASDTDRSE and DPDKAAFHERDSDILK.

The protein resides in the membrane. The sequence is that of Leucine-rich repeat-containing protein 66 (LRRC66) from Homo sapiens (Human).